A 494-amino-acid polypeptide reads, in one-letter code: Acetyl-coenzyme A carboxylase carboxyl transferase subunit beta, chloroplastic (494 aa).

One can recognise a CoA carboxyltransferase N-terminal domain in the interval 230–494; that stretch reads LWVQCENCYG…LHGFFPLNQN (265 aa). Residues C234, C237, C253, and C256 each coordinate Zn(2+). A C4-type zinc finger spans residues 234-256; sequence CENCYGLNYKKFFRSKMNICEQC.

Belongs to the AccD/PCCB family. Acetyl-CoA carboxylase is a heterohexamer composed of biotin carboxyl carrier protein, biotin carboxylase and 2 subunits each of ACCase subunit alpha and ACCase plastid-coded subunit beta (accD). Requires Zn(2+) as cofactor.

Its subcellular location is the plastid. It localises to the chloroplast stroma. The enzyme catalyses N(6)-carboxybiotinyl-L-lysyl-[protein] + acetyl-CoA = N(6)-biotinyl-L-lysyl-[protein] + malonyl-CoA. It participates in lipid metabolism; malonyl-CoA biosynthesis; malonyl-CoA from acetyl-CoA: step 1/1. Its function is as follows. Component of the acetyl coenzyme A carboxylase (ACC) complex. Biotin carboxylase (BC) catalyzes the carboxylation of biotin on its carrier protein (BCCP) and then the CO(2) group is transferred by the transcarboxylase to acetyl-CoA to form malonyl-CoA. This is Acetyl-coenzyme A carboxylase carboxyl transferase subunit beta, chloroplastic from Drimys granadensis.